The chain runs to 334 residues: uncharacterized protein (334 aa).

This sequence belongs to the PAPS reductase family.

This is an uncharacterized protein from Escherichia phage 186 (Bacteriophage 186).